Here is a 1060-residue protein sequence, read N- to C-terminus: Carbamoyl phosphate synthase large chain (1060 aa).

The interval 1–401 (MPKRTDIRKI…SLLKACRSLE (401 aa)) is carboxyphosphate synthetic domain. Residues Arg129, Arg169, Gly175, Gly176, Arg208, Ile210, Glu215, Gly241, Ile242, His243, Gln284, and Glu298 each coordinate ATP. Residues 133-327 (KQLMEELNQP…IAKLAAKIAV (195 aa)) enclose the ATP-grasp 1 domain. The Mg(2+) site is built by Gln284, Glu298, and Asn300. Mn(2+) is bound by residues Gln284, Glu298, and Asn300. The tract at residues 402-546 (IGVDHIKIAD…YSTYAVENES (145 aa)) is oligomerization domain. Residues 547-929 (LISDKASILV…ALYKAFEAAY (383 aa)) form a carbamoyl phosphate synthetic domain region. The region spanning 671–861 (EATLQALNIP…MAQVATKVIL (191 aa)) is the ATP-grasp 2 domain. ATP is bound by residues Arg707, Ala746, Leu748, Glu752, Gly777, Val778, His779, Ser780, Gln820, and Glu832. Mg(2+) contacts are provided by Gln820, Glu832, and Asn834. Mn(2+)-binding residues include Gln820, Glu832, and Asn834. The region spanning 930 to 1060 (LHMPDYGNIV…SRAFTLKVLD (131 aa)) is the MGS-like domain. The tract at residues 930–1060 (LHMPDYGNIV…SRAFTLKVLD (131 aa)) is allosteric domain.

Belongs to the CarB family. As to quaternary structure, composed of two chains; the small (or glutamine) chain promotes the hydrolysis of glutamine to ammonia, which is used by the large (or ammonia) chain to synthesize carbamoyl phosphate. Tetramer of heterodimers (alpha,beta)4. Requires Mg(2+) as cofactor. Mn(2+) is required as a cofactor.

The enzyme catalyses hydrogencarbonate + L-glutamine + 2 ATP + H2O = carbamoyl phosphate + L-glutamate + 2 ADP + phosphate + 2 H(+). It carries out the reaction hydrogencarbonate + NH4(+) + 2 ATP = carbamoyl phosphate + 2 ADP + phosphate + 2 H(+). Its pathway is amino-acid biosynthesis; L-arginine biosynthesis; carbamoyl phosphate from bicarbonate: step 1/1. The protein operates within pyrimidine metabolism; UMP biosynthesis via de novo pathway; (S)-dihydroorotate from bicarbonate: step 1/3. Large subunit of the glutamine-dependent carbamoyl phosphate synthetase (CPSase). CPSase catalyzes the formation of carbamoyl phosphate from the ammonia moiety of glutamine, carbonate, and phosphate donated by ATP, constituting the first step of 2 biosynthetic pathways, one leading to arginine and/or urea and the other to pyrimidine nucleotides. The large subunit (synthetase) binds the substrates ammonia (free or transferred from glutamine from the small subunit), hydrogencarbonate and ATP and carries out an ATP-coupled ligase reaction, activating hydrogencarbonate by forming carboxy phosphate which reacts with ammonia to form carbamoyl phosphate. The polypeptide is Carbamoyl phosphate synthase large chain (Streptococcus agalactiae serotype III (strain NEM316)).